A 402-amino-acid chain; its full sequence is 3-dehydroquinate synthase (402 aa).

This sequence belongs to the archaeal-type DHQ synthase family.

It carries out the reaction 2-amino-2,3,7-trideoxy-D-lyxo-hept-6-ulosonate + NAD(+) + H2O = 3-dehydroquinate + NH4(+) + NADH + H(+). Catalyzes the oxidative deamination and cyclization of 2-amino-3,7-dideoxy-D-threo-hept-6-ulosonic acid (ADH) to yield 3-dehydroquinate (DHQ), which is fed into the canonical shikimic pathway of aromatic amino acid biosynthesis. The chain is 3-dehydroquinate synthase from Methanopyrus kandleri (strain AV19 / DSM 6324 / JCM 9639 / NBRC 100938).